The sequence spans 86 residues: Centromere protein W (86 aa).

This sequence belongs to the CENP-W/WIP1 family. Heterodimer with CENPT; this dimer coassembles with CENPS-CENPX heterodimers at centromeres to form the tetrameric CENP-T-W-S-X complex, which is a subcomplex of the large constitutive centromere-associated network (CCAN, also known as the interphase centromere complex or ICEN). Interacts with NPM1.

It localises to the nucleus. The protein resides in the chromosome. The protein localises to the centromere. Its subcellular location is the kinetochore. It is found in the nucleus matrix. It localises to the nucleolus. In terms of biological role, component of the CENPA-NAC (nucleosome-associated) complex, a complex that plays a central role in assembly of kinetochore proteins, mitotic progression and chromosome segregation. The CENPA-NAC complex recruits the CENPA-CAD (nucleosome distal) complex and may be involved in incorporation of newly synthesized CENPA into centromeres. Part of a nucleosome-associated complex that binds specifically to histone H3-containing nucleosomes at the centromere, as opposed to nucleosomes containing CENPA. Component of the heterotetrameric CENP-T-W-S-X complex that binds and supercoils DNA, and plays an important role in kinetochore assembly. CENPW has a fundamental role in kinetochore assembly and function. It is one of the inner kinetochore proteins, with most further proteins binding downstream. Required for normal chromosome organization and normal progress through mitosis. The polypeptide is Centromere protein W (Cenpw) (Rattus norvegicus (Rat)).